The primary structure comprises 666 residues: TATA box-binding protein-associated factor RNA polymerase I subunit B (666 aa).

The RRN7-type zinc finger occupies 1-29 (MICTECENDAFDEEDDGYYYCQRCGVQVE). Zn(2+) contacts are provided by Cys-3, Cys-6, Cys-21, and Cys-24. The interval 30–64 (NLIQTGVDDGDLIGEGGGTQGALYNPKHRRTEPQP) is B-reader. Disordered stretches follow at residues 45–110 (GGGT…VDKE) and 189–208 (DSEHQSEDGEVKDAKRLKRH). Residues 65 to 80 (ITPSQPRFTDDTSRYS) form a B-linker region. A compositionally biased stretch (polar residues) spans 78 to 89 (RYSQFKSQFESE). Residues 81 to 285 (QFKSQFESEN…REQMGERSAA (205 aa)) form an N-terminal cyclin fold region. 2 stretches are compositionally biased toward basic and acidic residues: residues 90 to 110 (NGNKELPREVKRAPDSYVDKE) and 189 to 202 (DSEHQSEDGEVKDA). A C-terminal cyclin fold region spans residues 286 to 288 (CPV). Positions 515-548 (SDGNNPCSSSSRRNESVSIGLDLSSSEHRESSSP) are disordered. Residues 539-548 (SSEHRESSSP) show a composition bias toward basic and acidic residues.

It belongs to the RRN7/TAF1B family. Interacts with TFIIF. Interacts with MEE14/CBP1, TBP1 and NRPB1 (via CTD). In terms of tissue distribution, expressed at high levels in seedlings, inflorescences and young siliques and at lower levels in roots. Not detected in leaves and stems. Detected in root tips and shoot apical meristems, in anthers, primarily in microspores with weaker expression in mature pollen grains and in the central cell of the mature female gametophyte. Not expressed in synergids, egg cells, antipodal cells, endosperm cells and fertilized egg cells.

The protein localises to the nucleus. The protein resides in the nucleolus. Its function is as follows. Component of RNA polymerase I core factor complex that acts as a GTF2B/TFIIB-like factor and plays a key role in multiple steps during transcription initiation such as pre-initiation complex (PIC) assembly and postpolymerase recruitment events in polymerase I (Pol I) transcription. Binds rDNA promoters and plays a role in Pol I recruitment. Required for the development of the one-cell zygote and endosperm in embryos. Required for micropylar pollen tube guidance, but has no effect on ovule development and gametophytic cell fate specification. May regulate the transcription of secreted cysteine-rich peptide (CRP) genes in the embryo sac. This Arabidopsis thaliana (Mouse-ear cress) protein is TATA box-binding protein-associated factor RNA polymerase I subunit B.